The following is a 144-amino-acid chain: Large ribosomal subunit protein uL15 (144 aa).

The disordered stretch occupies residues 1-45 (MNLNTLSPDPGSRPSRRRVGRGIGSGLGKTCGKGHKGQKSRAGGY). Over residues 21–31 (RGIGSGLGKTC) the composition is skewed to gly residues.

Belongs to the universal ribosomal protein uL15 family. As to quaternary structure, part of the 50S ribosomal subunit.

Its function is as follows. Binds to the 23S rRNA. The polypeptide is Large ribosomal subunit protein uL15 (Legionella pneumophila (strain Corby)).